A 502-amino-acid chain; its full sequence is MPKTEETVLQNDPSVAENGAPEPKTPGQSQKSKSFCLDDQSPDLIETVNEVSKLSISHEIVVNQDFYVEETILPPNSVEGRFAEAMYNAFWNHLKEQLLSTPPDFTCALELLKDVKETLLSLLLPWQNRLRNEIEEALDTDLLKQEAEHGALDVPHLSNYILNLMALLCAPVRDEAIQKLETIRDPVQLLRGILRVLGLMKMDMVNYTIQSFRPYLQEHSIQYEQAKFQELLDKQPSLLDYTTKWLTKAATDITTLCPSSPDSPSSSCSMVCSLPSGAGNNSEPPSPTMVLYQGYLNLLLWDLENVEFPETLLMDRIRLQELAFQLHQLTVLASVLLVARSFSGEVLFRSPEFVDRLKCTTKALTEEFISRPEETMLSVSEQVSQEVHQGLKDMGLTTLSSENTASLLGQLQNITKKENCIRSIVDQWIRFFLKCCLLHGMQESLLHFPGGLILIEKELAELGWKFLNLMHHNQQVFGPYYAEILKHIIHPAQAQETDVEPN.

The interval 1–36 (MPKTEETVLQNDPSVAENGAPEPKTPGQSQKSKSFC) is disordered.

It belongs to the TCP11 family.

In Homo sapiens (Human), this protein is T-complex protein 11-like X-linked protein 1.